A 290-amino-acid chain; its full sequence is 33 kDa chaperonin (290 aa).

Intrachain disulfides connect Cys-235/Cys-237 and Cys-268/Cys-271.

Belongs to the HSP33 family. In terms of processing, under oxidizing conditions two disulfide bonds are formed involving the reactive cysteines. Under reducing conditions zinc is bound to the reactive cysteines and the protein is inactive.

The protein resides in the cytoplasm. Redox regulated molecular chaperone. Protects both thermally unfolding and oxidatively damaged proteins from irreversible aggregation. Plays an important role in the bacterial defense system toward oxidative stress. The chain is 33 kDa chaperonin from Streptococcus pyogenes serotype M5 (strain Manfredo).